Here is a 357-residue protein sequence, read N- to C-terminus: UDP-N-acetylglucosamine--N-acetylmuramyl-(pentapeptide) pyrophosphoryl-undecaprenol N-acetylglucosamine transferase (357 aa).

UDP-N-acetyl-alpha-D-glucosamine contacts are provided by residues 14-16 (TAG), arginine 168, serine 198, and glutamine 292.

Belongs to the glycosyltransferase 28 family. MurG subfamily.

It is found in the cell membrane. It catalyses the reaction di-trans,octa-cis-undecaprenyl diphospho-N-acetyl-alpha-D-muramoyl-L-alanyl-D-glutamyl-meso-2,6-diaminopimeloyl-D-alanyl-D-alanine + UDP-N-acetyl-alpha-D-glucosamine = di-trans,octa-cis-undecaprenyl diphospho-[N-acetyl-alpha-D-glucosaminyl-(1-&gt;4)]-N-acetyl-alpha-D-muramoyl-L-alanyl-D-glutamyl-meso-2,6-diaminopimeloyl-D-alanyl-D-alanine + UDP + H(+). It participates in cell wall biogenesis; peptidoglycan biosynthesis. Functionally, cell wall formation. Catalyzes the transfer of a GlcNAc subunit on undecaprenyl-pyrophosphoryl-MurNAc-pentapeptide (lipid intermediate I) to form undecaprenyl-pyrophosphoryl-MurNAc-(pentapeptide)GlcNAc (lipid intermediate II). This chain is UDP-N-acetylglucosamine--N-acetylmuramyl-(pentapeptide) pyrophosphoryl-undecaprenol N-acetylglucosamine transferase, found in Oceanobacillus iheyensis (strain DSM 14371 / CIP 107618 / JCM 11309 / KCTC 3954 / HTE831).